We begin with the raw amino-acid sequence, 373 residues long: mRNA export factor rae-1 (373 aa).

M1 is modified (N-acetylmethionine). WD repeat units lie at residues 40–82, 87–126, 128–169, and 276–315; these read APED…TFEG, NIPAPILDIAWIEDSSKIFIACADKEARLWDLASNQVAVV, THDG…NQTQ, and QEIYAVNDICFHPQHGTLVTIGSDGRYSMWDKDARTKLKT.

It belongs to the WD repeat rae1 family. The nuclear pore complex (NPC) constitutes the exclusive means of nucleocytoplasmic transport. NPCs allow the passive diffusion of ions and small molecules and the active, nuclear transport receptor-mediated bidirectional transport of macromolecules such as proteins, RNAs, ribonucleoparticles (RNPs), and ribosomal subunits across the nuclear envelope. Interacts with rpm-1. Expressed along the ventral and dorsal nerve cords.

The protein localises to the nucleus. It is found in the nuclear pore complex. It localises to the cell projection. The protein resides in the axon. Its subcellular location is the synapse. In terms of biological role, functions as a component of the nuclear pore complex (NPC). NPC components, collectively referred to as nucleoporins (NUPs), can play the role of both NPC structural components and of docking or interaction partners for transiently associated nuclear transport factors. It is specifically important for nuclear mRNA export. Has a role in neuronal development, where it acts downstream of rpm-1 to control axon termination and synapse formation in anterior lateral microtubule (ALM) and posterior lateral microtubule (PLM) mechanosensory neurons. The polypeptide is mRNA export factor rae-1 (Caenorhabditis elegans).